The primary structure comprises 315 residues: Homoserine kinase (315 aa).

An ATP-binding site is contributed by 97–107 (PPARGLGSSAT).

The protein belongs to the GHMP kinase family. Homoserine kinase subfamily.

It is found in the cytoplasm. The enzyme catalyses L-homoserine + ATP = O-phospho-L-homoserine + ADP + H(+). It participates in amino-acid biosynthesis; L-threonine biosynthesis; L-threonine from L-aspartate: step 4/5. Functionally, catalyzes the ATP-dependent phosphorylation of L-homoserine to L-homoserine phosphate. This is Homoserine kinase from Parasynechococcus marenigrum (strain WH8102).